We begin with the raw amino-acid sequence, 391 residues long: Leucine aminopeptidase 1 (391 aa).

Residues M1 to A19 form the signal peptide. Positions A20–V91 are excised as a propeptide. N-linked (GlcNAc...) asparagine glycosylation is present at N183. 2 residues coordinate Zn(2+): H191 and D210. N-linked (GlcNAc...) asparagine glycosylation is present at N235. Residues E249 and D276 each contribute to the Zn(2+) site. An intrachain disulfide couples C325 to C329. H358 lines the Zn(2+) pocket.

This sequence belongs to the peptidase M28 family. M28E subfamily. In terms of assembly, monomer. Requires Zn(2+) as cofactor.

It is found in the secreted. Extracellular aminopeptidase that allows assimilation of proteinaceous substrates. The protein is Leucine aminopeptidase 1 (lap1) of Aspergillus niger (strain ATCC MYA-4892 / CBS 513.88 / FGSC A1513).